The primary structure comprises 459 residues: Ribulose bisphosphate carboxylase large chain (459 aa).

K4 carries the N6,N6,N6-trimethyllysine modification. N113 and T163 together coordinate substrate. The active-site Proton acceptor is K165. K167 contacts substrate. Mg(2+)-binding residues include K191, D193, and E194. The residue at position 191 (K191) is an N6-carboxylysine. H284 acts as the Proton acceptor in catalysis. Substrate-binding residues include R285, H317, and S369.

Belongs to the RuBisCO large chain family. Type I subfamily. In terms of assembly, heterohexadecamer of 8 large chains and 8 small chains; disulfide-linked. The disulfide link is formed within the large subunit homodimers. Mg(2+) serves as cofactor. The disulfide bond which can form in the large chain dimeric partners within the hexadecamer appears to be associated with oxidative stress and protein turnover.

The protein localises to the plastid. It localises to the chloroplast. It carries out the reaction 2 (2R)-3-phosphoglycerate + 2 H(+) = D-ribulose 1,5-bisphosphate + CO2 + H2O. The enzyme catalyses D-ribulose 1,5-bisphosphate + O2 = 2-phosphoglycolate + (2R)-3-phosphoglycerate + 2 H(+). In terms of biological role, ruBisCO catalyzes two reactions: the carboxylation of D-ribulose 1,5-bisphosphate, the primary event in carbon dioxide fixation, as well as the oxidative fragmentation of the pentose substrate in the photorespiration process. Both reactions occur simultaneously and in competition at the same active site. This is Ribulose bisphosphate carboxylase large chain from Heuchera micrantha (Alum root).